The primary structure comprises 384 residues: Formate-dependent phosphoribosylglycinamide formyltransferase (384 aa).

Residues 14–15 and Glu74 contribute to the N(1)-(5-phospho-beta-D-ribosyl)glycinamide site; that span reads EL. ATP is bound by residues Arg106, Lys147, 152–157, 187–190, and Glu195; these read SSGKGQ and EEFI. Residues 111–300 form the ATP-grasp domain; it reads RLAAETLHLP…EFALHVRAVL (190 aa). The Mg(2+) site is built by Glu259 and Glu271. Residues Asp278, Lys348, and 355 to 356 contribute to the N(1)-(5-phospho-beta-D-ribosyl)glycinamide site; that span reads RR.

Belongs to the PurK/PurT family. As to quaternary structure, homodimer.

The catalysed reaction is N(1)-(5-phospho-beta-D-ribosyl)glycinamide + formate + ATP = N(2)-formyl-N(1)-(5-phospho-beta-D-ribosyl)glycinamide + ADP + phosphate + H(+). Its pathway is purine metabolism; IMP biosynthesis via de novo pathway; N(2)-formyl-N(1)-(5-phospho-D-ribosyl)glycinamide from N(1)-(5-phospho-D-ribosyl)glycinamide (formate route): step 1/1. Functionally, involved in the de novo purine biosynthesis. Catalyzes the transfer of formate to 5-phospho-ribosyl-glycinamide (GAR), producing 5-phospho-ribosyl-N-formylglycinamide (FGAR). Formate is provided by PurU via hydrolysis of 10-formyl-tetrahydrofolate. This chain is Formate-dependent phosphoribosylglycinamide formyltransferase, found in Bacillus velezensis (strain DSM 23117 / BGSC 10A6 / LMG 26770 / FZB42) (Bacillus amyloliquefaciens subsp. plantarum).